The chain runs to 229 residues: Chloride conductance regulatory protein ICln (229 aa).

It belongs to the pICln (TC 1.A.47) family. In terms of assembly, homooligomer.

It localises to the cytoplasm. Its subcellular location is the nucleus. May participate in cellular volume control by activation of a swelling-induced chloride conductance pathway. In Arabidopsis thaliana (Mouse-ear cress), this protein is Chloride conductance regulatory protein ICln.